Consider the following 561-residue polypeptide: Putative transport protein YbjL (561 aa).

Helical transmembrane passes span 8–28, 32–52, 66–86, 94–114, and 158–178; these read LLNGNYILLLFVVLALGLCLG, LGSVQLGNSIGVLVVSLLLGQ, FMLFIFCVGVEAGPNFFSIFF, MLALVMVGSALLIALGLGKLF, and NLSLGYALTYLIGLVSLIVGA. RCK C-terminal domains are found at residues 200-288 and 292-373; these read RGLD…SFRN and VFDR…RIGF. 5 helical membrane passes run 383–403, 406–426, 447–467, 475–495, and 540–560; these read LLAFCAFFIIGLMIGMITFQF, FSFGIGNAAGLLFAGIMLGFL, FGLMVFMAGVGLSAGSGISNG, MLIAGLVVSLVPVVICFLFGA, and AIANVLLTLAGTLIVIIWPGL.

Belongs to the AAE transporter (TC 2.A.81) family. YbjL subfamily.

The protein resides in the cell membrane. This chain is Putative transport protein YbjL, found in Salmonella agona (strain SL483).